We begin with the raw amino-acid sequence, 188 residues long: V-type proton ATPase subunit E (188 aa).

It belongs to the V-ATPase E subunit family.

Functionally, produces ATP from ADP in the presence of a proton gradient across the membrane. This Dictyoglomus thermophilum (strain ATCC 35947 / DSM 3960 / H-6-12) protein is V-type proton ATPase subunit E.